Consider the following 94-residue polypeptide: Conotoxin Qc6.1 (94 aa).

The N-terminal stretch at 1 to 22 (MKLTCMMIVALLFLTAWTFVTA) is a signal peptide. Positions 23 to 62 (VDSKNELENRGGWGQAGGWGKLFPMARDEMKNSEVSKLDN) are excised as a propeptide. 3 cysteine pairs are disulfide-bonded: cysteine 66-cysteine 84, cysteine 73-cysteine 88, and cysteine 83-cysteine 92.

The protein belongs to the conotoxin O1 superfamily. As to expression, expressed by the venom duct.

The protein resides in the secreted. This Conus quercinus (Oak cone) protein is Conotoxin Qc6.1.